We begin with the raw amino-acid sequence, 298 residues long: MLKLAFVTFLFALASARPQDVDSNRVVALPQDNFEVTDIGFEKIKAEPAPEVVNNDASYAYAVDISVPTTVSQMNCLKTSRYAAVFIRGFTPFGSGAFDTTSVTSIRNAYSAGLGIEVYMTPQPLSSLQGYQQLDALYNGLNGNGITIRSVWIQVTSPANWQKSATTNVNFLNSIISRAKQYGLTVGIYTNQYDWSQITGNWATLSSDVLLWYWHVLGGGVTGETPATFDDFRAFGSFKKASVKQFAQVESVCSLTVNRDVYVVGIPAAASSKNTDFFTQEDISSNNKKIVVGGVIGV.

An N-terminal signal peptide occupies residues 1–16 (MLKLAFVTFLFALASA). Residues 59 to 277 (YAYAVDISVP…AAASSKNTDF (219 aa)) form the Ch-type lysozyme domain.

The protein belongs to the glycosyl hydrolase 25 family. In terms of tissue distribution, expressed in intestine, IL2 and IL6 neurons and some neurons in the head ganglia.

The protein resides in the cytoplasmic vesicle lumen. Involved in resistance to Gram-negative bacterium S.marcescens and to bacterium Gram-positive S.aureus infection. This is Lysozyme-like protein 1 from Caenorhabditis elegans.